The sequence spans 428 residues: Enolase 1 (428 aa).

(2R)-2-phosphoglycerate is bound at residue Gln167. Residue Glu209 is the Proton donor of the active site. 3 residues coordinate Mg(2+): Asp246, Glu288, and Asp315. (2R)-2-phosphoglycerate is bound by residues Lys340, Arg369, Ser370, and Lys391. Lys340 functions as the Proton acceptor in the catalytic mechanism.

This sequence belongs to the enolase family. Component of the RNA degradosome, a multiprotein complex involved in RNA processing and mRNA degradation. Mg(2+) serves as cofactor.

The protein localises to the cytoplasm. It is found in the secreted. It localises to the cell surface. It carries out the reaction (2R)-2-phosphoglycerate = phosphoenolpyruvate + H2O. Its pathway is carbohydrate degradation; glycolysis; pyruvate from D-glyceraldehyde 3-phosphate: step 4/5. Functionally, catalyzes the reversible conversion of 2-phosphoglycerate (2-PG) into phosphoenolpyruvate (PEP). It is essential for the degradation of carbohydrates via glycolysis. The polypeptide is Enolase 1 (Pseudomonas syringae pv. syringae (strain B728a)).